We begin with the raw amino-acid sequence, 217 residues long: MIPQVVTNETITTISPNGINFPQKDESQPTQQRQDSLKKHLKAEIKVIVAIQIMCAVTVLALGIILASVPPVPYFNSVFSVLLKSGYPFIGALFFIASGILSIITERKSTKPLVDASLTLNILSVSFAFVGIIIISVSLAGLHPASEQCKQSKELSLIEHDYYQPFYNSDRSECAVTKSILTGALSVMLIISVLELGLALLSAMLWLREGVLTSLRM.

Over residues 1–20 (MIPQVVTNETITTISPNGIN) the composition is skewed to polar residues. Positions 1-33 (MIPQVVTNETITTISPNGINFPQKDESQPTQQR) are disordered. The Cytoplasmic segment spans residues 1–46 (MIPQVVTNETITTISPNGINFPQKDESQPTQQRQDSLKKHLKAEIK). A helical membrane pass occupies residues 47-67 (VIVAIQIMCAVTVLALGIILA). The Extracellular segment spans residues 68-84 (SVPPVPYFNSVFSVLLK). Residues 85–105 (SGYPFIGALFFIASGILSIIT) form a helical membrane-spanning segment. The Cytoplasmic segment spans residues 106–121 (ERKSTKPLVDASLTLN). Residues 122–142 (ILSVSFAFVGIIIISVSLAGL) traverse the membrane as a helical segment. The Extracellular portion of the chain corresponds to 143 to 186 (HPASEQCKQSKELSLIEHDYYQPFYNSDRSECAVTKSILTGALS). A helical membrane pass occupies residues 187-207 (VMLIISVLELGLALLSAMLWL). The Cytoplasmic segment spans residues 208–217 (REGVLTSLRM).

This sequence belongs to the MS4A family. Expressed only by thymus, spleen, peripheral lymph node and bone marrow.

It is found in the membrane. May be involved in signal transduction as a component of a multimeric receptor complex. This Mus musculus (Mouse) protein is Membrane-spanning 4-domains subfamily A member 6C (Ms4a6c).